The following is a 662-amino-acid chain: Aprataxin-like protein (662 aa).

Residues 4–108 (SSALIKDISK…ISKDFVSTSL (105 aa)) form the HIT domain. A C2H2-type zinc finger spans residues 381–403 (LRCNQCEFVTNMLLDLKAHLYQH). Positions 482-662 (KNINGPSVNM…PAPPSNSKPS (181 aa)) are disordered. Over residues 490 to 500 (NMMNQNNPNNP) the composition is skewed to low complexity. Composition is skewed to polar residues over residues 501–513 (FRNTPHLNRQSQK) and 560–569 (GHQQFPNASS). A compositionally biased stretch (gly residues) spans 570–582 (VGGGQTGLPGQGQ). Over residues 588-599 (WNSNKIFNQQNR) the composition is skewed to polar residues. The segment covering 600-626 (QNTVQAQPQAQNQQTNQQQIQNSNKNQ) has biased composition (low complexity). Over residues 653–662 (PAPPSNSKPS) the composition is skewed to pro residues.

The protein localises to the nucleus. Its function is as follows. DNA-binding protein involved in single-strand DNA break repair, double-strand DNA break repair and base excision repair. Resolves abortive DNA ligation intermediates formed either at base excision sites, or when DNA ligases attempt to repair non-ligatable breaks induced by reactive oxygen species. Catalyzes the release of adenylate groups covalently linked to 5'-phosphate termini, resulting in the production of 5'-phosphate termini that can be efficiently rejoined. This Drosophila melanogaster (Fruit fly) protein is Aprataxin-like protein.